Consider the following 160-residue polypeptide: SsrA-binding protein (160 aa).

The segment at 133–160 (KKLHDKRETEKERDWNRQKSRLLKGNSQ) is disordered. The segment covering 137 to 149 (DKRETEKERDWNR) has biased composition (basic and acidic residues).

This sequence belongs to the SmpB family.

The protein resides in the cytoplasm. Required for rescue of stalled ribosomes mediated by trans-translation. Binds to transfer-messenger RNA (tmRNA), required for stable association of tmRNA with ribosomes. tmRNA and SmpB together mimic tRNA shape, replacing the anticodon stem-loop with SmpB. tmRNA is encoded by the ssrA gene; the 2 termini fold to resemble tRNA(Ala) and it encodes a 'tag peptide', a short internal open reading frame. During trans-translation Ala-aminoacylated tmRNA acts like a tRNA, entering the A-site of stalled ribosomes, displacing the stalled mRNA. The ribosome then switches to translate the ORF on the tmRNA; the nascent peptide is terminated with the 'tag peptide' encoded by the tmRNA and targeted for degradation. The ribosome is freed to recommence translation, which seems to be the essential function of trans-translation. In Agrobacterium fabrum (strain C58 / ATCC 33970) (Agrobacterium tumefaciens (strain C58)), this protein is SsrA-binding protein.